A 549-amino-acid polypeptide reads, in one-letter code: Glucose-6-phosphate isomerase (549 aa).

The active-site Proton donor is Glu353. Residues His384 and Lys513 contribute to the active site.

It belongs to the GPI family.

Its subcellular location is the cytoplasm. It carries out the reaction alpha-D-glucose 6-phosphate = beta-D-fructose 6-phosphate. Its pathway is carbohydrate biosynthesis; gluconeogenesis. It participates in carbohydrate degradation; glycolysis; D-glyceraldehyde 3-phosphate and glycerone phosphate from D-glucose: step 2/4. Functionally, catalyzes the reversible isomerization of glucose-6-phosphate to fructose-6-phosphate. The sequence is that of Glucose-6-phosphate isomerase from Bartonella bacilliformis (strain ATCC 35685 / KC583 / Herrer 020/F12,63).